The sequence spans 335 residues: Transcriptional adapter 1 (335 aa).

The protein belongs to the TADA1 family. As to quaternary structure, component of the STAGA transcription coactivator-HAT complex, at least composed of SUPT3H, GCN5L2, TAF5L, TAF6L, SUPT7L, TADA3L, TAD1L, TAF10, TAF12, TRRAP and TAF9.

The protein localises to the nucleus. Probably involved in transcriptional regulation. This chain is Transcriptional adapter 1 (Tada1), found in Mus musculus (Mouse).